The primary structure comprises 214 residues: Probable transaldolase (214 aa).

Lys83 acts as the Schiff-base intermediate with substrate in catalysis.

Belongs to the transaldolase family. Type 3B subfamily.

It localises to the cytoplasm. It catalyses the reaction D-sedoheptulose 7-phosphate + D-glyceraldehyde 3-phosphate = D-erythrose 4-phosphate + beta-D-fructose 6-phosphate. It functions in the pathway carbohydrate degradation; pentose phosphate pathway; D-glyceraldehyde 3-phosphate and beta-D-fructose 6-phosphate from D-ribose 5-phosphate and D-xylulose 5-phosphate (non-oxidative stage): step 2/3. Transaldolase is important for the balance of metabolites in the pentose-phosphate pathway. This Leptospira borgpetersenii serovar Hardjo-bovis (strain JB197) protein is Probable transaldolase.